A 344-amino-acid chain; its full sequence is N-lysine methyltransferase KMT5A-A (344 aa).

Positions 143 to 176 (TSSKHRKPARRKVKRSTKRAAESKSPANRKVTDY) are disordered. Basic residues predominate over residues 145–160 (SKHRKPARRKVKRSTK). One can recognise an SET domain in the interval 208 to 329 (DGMMVRFIEG…EGEELLYDYG (122 aa)). S-adenosyl-L-methionine contacts are provided by residues 218–220 (KGR), Tyr-263, and 290–291 (NH).

The protein belongs to the class V-like SAM-binding methyltransferase superfamily. Histone-lysine methyltransferase family. PR/SET subfamily.

The protein resides in the nucleus. It localises to the chromosome. The catalysed reaction is L-lysyl(20)-[histone H4] + S-adenosyl-L-methionine = N(6)-methyl-L-lysyl(20)-[histone H4] + S-adenosyl-L-homocysteine + H(+). It carries out the reaction L-lysyl-[protein] + S-adenosyl-L-methionine = N(6)-methyl-L-lysyl-[protein] + S-adenosyl-L-homocysteine + H(+). In terms of biological role, protein-lysine N-methyltransferase that monomethylates both histones and non-histone proteins. Specifically monomethylates 'Lys-20' of histone H4 (H4K20me1). H4K20me1 is enriched during mitosis and represents a specific tag for epigenetic transcriptional repression. Mainly functions in euchromatin regions, thereby playing a central role in the silencing of euchromatic genes. Required for cell proliferation, probably by contributing to the maintenance of proper higher-order structure of DNA during mitosis. Involved in chromosome condensation and proper cytokinesis. This is N-lysine methyltransferase KMT5A-A from Danio rerio (Zebrafish).